The sequence spans 274 residues: Exosome complex component Rrp42 (274 aa).

It belongs to the RNase PH family. Rrp42 subfamily. In terms of assembly, component of the archaeal exosome complex. Forms a hexameric ring-like arrangement composed of 3 Rrp41-Rrp42 heterodimers. The hexameric ring associates with a trimer of Rrp4 and/or Csl4 subunits.

The protein localises to the cytoplasm. In terms of biological role, non-catalytic component of the exosome, which is a complex involved in RNA degradation. Contributes to the structuring of the Rrp41 active site. In Pyrobaculum aerophilum (strain ATCC 51768 / DSM 7523 / JCM 9630 / CIP 104966 / NBRC 100827 / IM2), this protein is Exosome complex component Rrp42.